Here is a 611-residue protein sequence, read N- to C-terminus: MPPYRSRTTTHGRNMAGARGLWRATGMKDEDFGKPIIAVVNSFTQFVPGHVHLKDLGQLVAREIESAGGVAKEFNTIAVDDGIAMGHDGMLYSLPSRELIADSVEYMVNAHCADAMVCISNCDKITPGMLMAALRLNIPVVFVSGGPMEAGKVVWEDSVKKLDLVDAMVAAADDHYTDEQVKAIERSACPTCGSCSGMFTANSMNCLTEALGLSLPGNGSTLATHADRKRLFVEAGHLIVDLARRYYEQDDESVLPRSIATFSAFENAMTLDIAMGGSTNTVLHLLAAAQEAEIDFTMADIDRLSRRVPVLCKVAPAVSSVHMEDVHHAGGIMGILGQLDNAGLLTTSIPTVHSETLAKALDHWDVTRTNSEMVHKFYSAAPGGVPTQVAFSQERRFDKVDTDREKGVIRSKEHAFSQDGGLAVLYGNLAEDGCIVKTAGVDDSILKFSGPARIFESQDSAVLGILNGKIKPGDIVLIRYEGPRGGPGMQEMLYPTSYLKSKGFGKACALITDGRFSGGSSGLSIGHVSPEAAEGGTIGLVREGDIIDIDIPNRKIHLAVDDATLAERRAEQDAAGWKPAEERKRKISTALKAYAAMATSAARGAVRKLPD.

Aspartate 81 contacts Mg(2+). A [2Fe-2S] cluster-binding site is contributed by cysteine 122. Residues aspartate 123 and lysine 124 each coordinate Mg(2+). Position 124 is an N6-carboxylysine (lysine 124). Position 195 (cysteine 195) interacts with [2Fe-2S] cluster. Position 491 (glutamate 491) interacts with Mg(2+). Catalysis depends on serine 517, which acts as the Proton acceptor.

It belongs to the IlvD/Edd family. Homodimer. Requires [2Fe-2S] cluster as cofactor. Mg(2+) serves as cofactor.

The catalysed reaction is (2R)-2,3-dihydroxy-3-methylbutanoate = 3-methyl-2-oxobutanoate + H2O. It carries out the reaction (2R,3R)-2,3-dihydroxy-3-methylpentanoate = (S)-3-methyl-2-oxopentanoate + H2O. It participates in amino-acid biosynthesis; L-isoleucine biosynthesis; L-isoleucine from 2-oxobutanoate: step 3/4. It functions in the pathway amino-acid biosynthesis; L-valine biosynthesis; L-valine from pyruvate: step 3/4. Functionally, functions in the biosynthesis of branched-chain amino acids. Catalyzes the dehydration of (2R,3R)-2,3-dihydroxy-3-methylpentanoate (2,3-dihydroxy-3-methylvalerate) into 2-oxo-3-methylpentanoate (2-oxo-3-methylvalerate) and of (2R)-2,3-dihydroxy-3-methylbutanoate (2,3-dihydroxyisovalerate) into 2-oxo-3-methylbutanoate (2-oxoisovalerate), the penultimate precursor to L-isoleucine and L-valine, respectively. The chain is Dihydroxy-acid dehydratase from Brucella canis (strain ATCC 23365 / NCTC 10854 / RM-666).